Here is a 123-residue protein sequence, read N- to C-terminus: DNA-directed RNA polymerase subunit omega (123 aa).

Positions 72-100 (QRVLPSEDEEDAAREERGQQMEALPAPPV) are disordered.

The protein belongs to the RNA polymerase subunit omega family. In terms of assembly, the RNAP catalytic core consists of 2 alpha, 1 beta, 1 beta' and 1 omega subunit. When a sigma factor is associated with the core the holoenzyme is formed, which can initiate transcription.

The enzyme catalyses RNA(n) + a ribonucleoside 5'-triphosphate = RNA(n+1) + diphosphate. Its function is as follows. Promotes RNA polymerase assembly. Latches the N- and C-terminal regions of the beta' subunit thereby facilitating its interaction with the beta and alpha subunits. The sequence is that of DNA-directed RNA polymerase subunit omega from Maricaulis maris (strain MCS10) (Caulobacter maris).